The primary structure comprises 962 residues: Glycine dehydrogenase (decarboxylating) (962 aa).

N6-(pyridoxal phosphate)lysine is present on K709.

The protein belongs to the GcvP family. The glycine cleavage system is composed of four proteins: P, T, L and H. Pyridoxal 5'-phosphate serves as cofactor.

It catalyses the reaction N(6)-[(R)-lipoyl]-L-lysyl-[glycine-cleavage complex H protein] + glycine + H(+) = N(6)-[(R)-S(8)-aminomethyldihydrolipoyl]-L-lysyl-[glycine-cleavage complex H protein] + CO2. Functionally, the glycine cleavage system catalyzes the degradation of glycine. The P protein binds the alpha-amino group of glycine through its pyridoxal phosphate cofactor; CO(2) is released and the remaining methylamine moiety is then transferred to the lipoamide cofactor of the H protein. This chain is Glycine dehydrogenase (decarboxylating), found in Shewanella oneidensis (strain ATCC 700550 / JCM 31522 / CIP 106686 / LMG 19005 / NCIMB 14063 / MR-1).